The chain runs to 342 residues: Phosphate acyltransferase (342 aa).

The protein belongs to the PlsX family. Homodimer. Probably interacts with PlsY.

The protein resides in the cytoplasm. The catalysed reaction is a fatty acyl-[ACP] + phosphate = an acyl phosphate + holo-[ACP]. Its pathway is lipid metabolism; phospholipid metabolism. Catalyzes the reversible formation of acyl-phosphate (acyl-PO(4)) from acyl-[acyl-carrier-protein] (acyl-ACP). This enzyme utilizes acyl-ACP as fatty acyl donor, but not acyl-CoA. The polypeptide is Phosphate acyltransferase (Shewanella sediminis (strain HAW-EB3)).